Reading from the N-terminus, the 400-residue chain is S-adenosylmethionine decarboxylase proenzyme (400 aa).

Catalysis depends on residues Glu-18 and Glu-21. Ser-78 (schiff-base intermediate with substrate; via pyruvic acid) is an active-site residue. The residue at position 78 (Ser-78) is a Pyruvic acid (Ser); by autocatalysis. The Proton donor; for catalytic activity role is filled by Cys-92. Active-site proton acceptor; for processing activity residues include Ser-243 and His-256.

This sequence belongs to the eukaryotic AdoMetDC family. The cofactor is pyruvate. In terms of processing, is synthesized initially as an inactive proenzyme. Formation of the active enzyme involves a self-maturation process in which the active site pyruvoyl group is generated from an internal serine residue via an autocatalytic post-translational modification. Two non-identical subunits are generated from the proenzyme in this reaction, and the pyruvate is formed at the N-terminus of the alpha chain, which is derived from the carboxyl end of the proenzyme. The post-translation cleavage follows an unusual pathway, termed non-hydrolytic serinolysis, in which the side chain hydroxyl group of the serine supplies its oxygen atom to form the C-terminus of the beta chain, while the remainder of the serine residue undergoes an oxidative deamination to produce ammonia and the pyruvoyl group blocking the N-terminus of the alpha chain.

It carries out the reaction S-adenosyl-L-methionine + H(+) = S-adenosyl 3-(methylsulfanyl)propylamine + CO2. Its pathway is amine and polyamine biosynthesis; S-adenosylmethioninamine biosynthesis; S-adenosylmethioninamine from S-adenosyl-L-methionine: step 1/1. The polypeptide is S-adenosylmethionine decarboxylase proenzyme (SAMDC) (Zea mays (Maize)).